The sequence spans 501 residues: Ribose import ATP-binding protein RbsA (501 aa).

ABC transporter domains follow at residues 5–241 (LQLK…VGRK) and 252–495 (APGE…VGKL). 37–44 (GENGAGKS) contacts ATP.

Belongs to the ABC transporter superfamily. Ribose importer (TC 3.A.1.2.1) family. The complex is composed of an ATP-binding protein (RbsA), two transmembrane proteins (RbsC) and a solute-binding protein (RbsB).

Its subcellular location is the cell inner membrane. It catalyses the reaction D-ribose(out) + ATP + H2O = D-ribose(in) + ADP + phosphate + H(+). In terms of biological role, part of the ABC transporter complex RbsABC involved in ribose import. Responsible for energy coupling to the transport system. The protein is Ribose import ATP-binding protein RbsA of Salmonella paratyphi A (strain ATCC 9150 / SARB42).